Here is a 396-residue protein sequence, read N- to C-terminus: Elongation factor Tu (396 aa).

Residues 11–205 (KPHVNIGTIG…VVDEYIPTPE (195 aa)) enclose the tr-type G domain. The tract at residues 20-27 (GHVDHGKT) is G1. 20–27 (GHVDHGKT) provides a ligand contact to GTP. Thr27 contributes to the Mg(2+) binding site. The tract at residues 61-65 (GITIN) is G2. Residues 82–85 (DAPG) are G3. GTP-binding positions include 82-86 (DAPGH) and 137-140 (NKCD). The segment at 137 to 140 (NKCD) is G4. The tract at residues 175 to 177 (SAL) is G5.

Belongs to the TRAFAC class translation factor GTPase superfamily. Classic translation factor GTPase family. EF-Tu/EF-1A subfamily. As to quaternary structure, monomer.

The protein localises to the cytoplasm. The enzyme catalyses GTP + H2O = GDP + phosphate + H(+). In terms of biological role, GTP hydrolase that promotes the GTP-dependent binding of aminoacyl-tRNA to the A-site of ribosomes during protein biosynthesis. The polypeptide is Elongation factor Tu (Lactobacillus delbrueckii subsp. bulgaricus (strain ATCC 11842 / DSM 20081 / BCRC 10696 / JCM 1002 / NBRC 13953 / NCIMB 11778 / NCTC 12712 / WDCM 00102 / Lb 14)).